The following is a 552-amino-acid chain: MNAASRTKLNQTPEWTALAKHREELGAPRLRELFARQPDRGTAYTLRVGDLHLDYSKHLVTDETLRLLRELAAATGVAELREAMFRGEKINTTEDRAVLHTALRAPRDAVVEVDGENVVPAVHAVLDKMAGFAEKVRSGQWTGHTGKPVKNIVNIGIGGSDLGPAMAYEVLRSFTDRDLTLRFVSNVDGADLHEAVRDLDPAETLFVIASKTFTTIETITNATSARDWLLTELRTGQDAVAKHFVALSTNAEKVEEFGIDTANMFEFWDWVGGRYSYDSAIGLSLMVAIGPDRFREMLEGFHLVDEHFRTAPPEENAPLLLGLLGVWYGNFFDAQSHAVLPYSHYLSKFTAYLQQLDMESNGKSVDRDGNPVDWQTGPVVWGTPGTNGQHAYYQLIHQGTKLIPADFIGFAAPVHDLLPGLIAQHDLLMANFFAQTQALAFGKTPEEVRAEGVPEELVPHKTFRGNHPTTTILADKLTPSVLGQLIALYEHKVFVQGAIWNIDSFDQWGVELGKVLAKKIEPLLTGDGGADAGELDSSTAALVDAYRTLRGR.

Glutamate 359 functions as the Proton donor in the catalytic mechanism. Active-site residues include histidine 390 and lysine 514.

Belongs to the GPI family.

It localises to the cytoplasm. It carries out the reaction alpha-D-glucose 6-phosphate = beta-D-fructose 6-phosphate. It functions in the pathway carbohydrate biosynthesis; gluconeogenesis. It participates in carbohydrate degradation; glycolysis; D-glyceraldehyde 3-phosphate and glycerone phosphate from D-glucose: step 2/4. In terms of biological role, catalyzes the reversible isomerization of glucose-6-phosphate to fructose-6-phosphate. This is Glucose-6-phosphate isomerase from Streptomyces griseus subsp. griseus (strain JCM 4626 / CBS 651.72 / NBRC 13350 / KCC S-0626 / ISP 5235).